A 314-amino-acid polypeptide reads, in one-letter code: Formimidoylglutamase (314 aa).

His127, Asp151, His153, Asp155, Asp239, and Asp241 together coordinate Mn(2+).

The protein belongs to the arginase family. Mn(2+) is required as a cofactor.

It carries out the reaction N-formimidoyl-L-glutamate + H2O = formamide + L-glutamate. It functions in the pathway amino-acid degradation; L-histidine degradation into L-glutamate; L-glutamate from N-formimidoyl-L-glutamate (hydrolase route): step 1/1. Catalyzes the conversion of N-formimidoyl-L-glutamate to L-glutamate and formamide. The sequence is that of Formimidoylglutamase from Corynebacterium efficiens (strain DSM 44549 / YS-314 / AJ 12310 / JCM 11189 / NBRC 100395).